The sequence spans 245 residues: MPFDPLFLWETFIALLAGIPLALKLAVFSIAVGTVLAFSLALMRVSRRWWLDFPARFYIFAFRGTPLLVQIYIIYYGLSQFPGLRHSLLWPFLREAYWCALGALALNTAAYSAEIMRGGLLSVPAGQIEAARACGMARVLLFRRIIIPQAIRQMLPGYSNEVVLMVKSTSLASTITLMEITGIAAKLISETYRPVEVFACAGAIYLTMNFIAARLFALIEWSLWPERRKTRRPVDLADQKGELHV.

5 consecutive transmembrane segments (helical) span residues 12–32, 57–77, 96–116, 163–183, and 199–219; these read FIALLAGIPLALKLAVFSIAV, FYIFAFRGTPLLVQIYIIYYG, AYWCALGALALNTAAYSAEIM, VLMVKSTSLASTITLMEITGI, and ACAGAIYLTMNFIAARLFALI. An ABC transmembrane type-1 domain is found at 19 to 216; sequence IPLALKLAVF…TMNFIAARLF (198 aa).

The protein belongs to the binding-protein-dependent transport system permease family. HisMQ subfamily.

The protein localises to the cell inner membrane. Component of the octopine active transport system probably consisting of four subunits: Q, M, P and T. This chain is Octopine transport system permease protein OccM (occM), found in Rhizobium meliloti (Ensifer meliloti).